The following is a 1040-amino-acid chain: Contactin-2 (1040 aa).

An N-terminal signal peptide occupies residues Met1–Ser30. Ig-like C2-type domains follow at residues Pro39–Arg130, Gln135–Ser224, Pro241–Ile324, Pro329–Ala413, Pro419–Ser506, and Thr511–Leu605. 4 disulfide bridges follow: Cys63–Cys113, Cys157–Cys209, Cys263–Cys308, and Cys350–Cys397. 3 N-linked (GlcNAc...) asparagine glycosylation sites follow: Asn78, Asn200, and Asn206. N-linked (GlcNAc...) asparagine glycosylation is found at Asn463, Asn479, Asn500, and Asn527. Fibronectin type-III domains lie at Pro612 to Ala710, Ala715 to Glu812, Ala817 to Pro913, and Pro917 to Thr1008. Asn777 carries N-linked (GlcNAc...) asparagine glycosylation. The Cell attachment site signature appears at Arg796–Asp798. 3 N-linked (GlcNAc...) asparagine glycosylation sites follow: Asn832, Asn920, and Asn942. Positions Gly897–Ser922 are disordered. The GPI-anchor amidated serine moiety is linked to residue Ser1014. The propeptide at Ser1015–Leu1040 is removed in mature form.

The protein belongs to the immunoglobulin superfamily. Contactin family.

It is found in the cell membrane. Its function is as follows. In conjunction with another transmembrane protein, CNTNAP2, contributes to the organization of axonal domains at nodes of Ranvier by maintaining voltage-gated potassium channels at the juxtaparanodal region. The protein is Contactin-2 (Cntn2) of Mus musculus (Mouse).